Here is a 262-residue protein sequence, read N- to C-terminus: Type III pantothenate kinase (262 aa).

Position 9-16 (Asp-9–Lys-16) interacts with ATP. Substrate is bound by residues Tyr-93 and Gly-100–Arg-103. Residue Asp-102 is the Proton acceptor of the active site. Residue Asp-122 coordinates K(+). Thr-125 is a binding site for ATP. Thr-175 provides a ligand contact to substrate.

This sequence belongs to the type III pantothenate kinase family. As to quaternary structure, homodimer. NH4(+) is required as a cofactor. It depends on K(+) as a cofactor.

Its subcellular location is the cytoplasm. The enzyme catalyses (R)-pantothenate + ATP = (R)-4'-phosphopantothenate + ADP + H(+). Its pathway is cofactor biosynthesis; coenzyme A biosynthesis; CoA from (R)-pantothenate: step 1/5. In terms of biological role, catalyzes the phosphorylation of pantothenate (Pan), the first step in CoA biosynthesis. The protein is Type III pantothenate kinase of Nitrosospira multiformis (strain ATCC 25196 / NCIMB 11849 / C 71).